A 20-amino-acid chain; its full sequence is Haemoporin (20 aa).

The segment at 1 to 20 (AAVPEAAAEATAEAAPVSEF) is disordered.

Homopentamer. Forms a cylindrical structure with a central pore. As to expression, detected in the hemolymph.

It is found in the secreted. This Aplysia californica (California sea hare) protein is Haemoporin.